The primary structure comprises 418 residues: ORC1-type DNA replication protein 2 (418 aa).

ATP is bound by residues threonine 72 to valine 76, tyrosine 218, and arginine 230.

The protein belongs to the CDC6/cdc18 family.

Involved in regulation of DNA replication. This Sulfurisphaera tokodaii (strain DSM 16993 / JCM 10545 / NBRC 100140 / 7) (Sulfolobus tokodaii) protein is ORC1-type DNA replication protein 2 (cdc6-2).